The sequence spans 920 residues: KIN14B-interacting protein At4g14310 (920 aa).

A compositionally biased stretch (basic residues) spans Met1 to Leu10. Disordered regions lie at residues Met1 to Thr199 and Ile309 to Ser375. Residues Pro35–Asn54 show a composition bias toward polar residues. The span at Thr90–Ser105 shows a compositional bias: low complexity. Basic and acidic residues predominate over residues Ser112–Ser135. Composition is skewed to polar residues over residues Leu137–Ser147 and Cys166–Ser184. The span at Leu327 to Leu337 shows a compositional bias: basic and acidic residues. Polar residues predominate over residues Ser345–Val355. Over residues Lys357–Pro374 the composition is skewed to basic and acidic residues. A coiled-coil region spans residues Thr435–Asp463.

Interacts with KIN14B, CDKA-1, CKS1 and CKS2.

The protein resides in the cytoplasm. Might be involved in division plane determination. This chain is KIN14B-interacting protein At4g14310, found in Arabidopsis thaliana (Mouse-ear cress).